The primary structure comprises 2148 residues: Polyketide synthase 1 (2148 aa).

The segment at 19–261 (FIFGDQSSCN…TPLAVHAPYH (243 aa)) is N-terminal acylcarrier protein transacylase domain (SAT). The Ketosynthase family 3 (KS3) domain maps to 394-829 (ESKIAIIGMS…GGNTALLVED (436 aa)). Active-site for beta-ketoacyl synthase activity residues include Cys-566, His-701, and His-745. The segment at 930-1236 (FVFSGQGSQY…MRNKDGWQVL (307 aa)) is malonyl-CoA:ACP transacylase (MAT) domain. The active-site For acyl/malonyl transferase activity is Ser-1018. Residues 1310 to 1624 (TASVHRMVHE…RKVLNTAMPP (315 aa)) form a product template (PT) domain region. The N-terminal hotdog fold stretch occupies residues 1314 to 1447 (HRMVHESVEK…SSLHFEQPKV (134 aa)). One can recognise a PKS/mFAS DH domain in the interval 1314–1619 (HRMVHESVEK…FQGIPRKVLN (306 aa)). The Proton acceptor; for dehydratase activity role is filled by His-1346. Residues 1474–1619 (LNSRMSSGVI…FQGIPRKVLN (146 aa)) form a C-terminal hotdog fold region. Asp-1533 functions as the Proton donor; for dehydratase activity in the catalytic mechanism. Residues 1619-1655 (NTAMPPPKSQNEAPVRSGPAKPAAKPPRSASSEHSGH) are disordered. Over residues 1634 to 1650 (RSGPAKPAAKPPRSASS) the composition is skewed to low complexity. Residues 1678 to 1752 (RNPMLPVFKI…DLAAQLGLDT (75 aa)) enclose the Carrier 1 domain. Position 1712 is an O-(pantetheine 4'-phosphoryl)serine (Ser-1712). The span at 1755-1790 (SDQSSGQSSSSGGLSPRSDSIGEITSSVTTPPSLSP) shows a compositional bias: low complexity. The segment at 1755–1796 (SDQSSGQSSSSGGLSPRSDSIGEITSSVTTPPSLSPRGSVSG) is disordered. The Carrier 2 domain occupies 1793–1870 (SVSGSQCKDV…SFKHMFQQGH (78 aa)). The residue at position 1830 (Ser-1830) is an O-(pantetheine 4'-phosphoryl)serine. Residues 1882–2146 (LKQYRATSTL…ERVAAFIRST (265 aa)) form a thioesterase (TE) domain region. Ser-1973 serves as the catalytic For thioesterase activity.

It participates in pigment biosynthesis. Polyketide synthase; part of the Pks1 gene cluster that mediates the biosynthesis of an anthraquinone derivative pigment that contributes to conidial pigmentation that provides protection from UV radiation, heat and cold stress. The polyketide synthase Pks1 produces 1-acetyl-2,4,6,8-tetrahydroxy-9,10-anthraquinone though condensation of acetyl-CoA with malonyl-CoA. The dehydratase EthD and the laccase Mlac1 further convert the anthraquinone derivative into the final conidial pigment. The chain is Polyketide synthase 1 from Metarhizium robertsii (strain ARSEF 23 / ATCC MYA-3075) (Metarhizium anisopliae (strain ARSEF 23)).